The primary structure comprises 273 residues: Urease accessory protein UreD (273 aa).

Belongs to the UreD family. UreD, UreF and UreG form a complex that acts as a GTP-hydrolysis-dependent molecular chaperone, activating the urease apoprotein by helping to assemble the nickel containing metallocenter of UreC. The UreE protein probably delivers the nickel.

Its subcellular location is the cytoplasm. Its function is as follows. Required for maturation of urease via the functional incorporation of the urease nickel metallocenter. The protein is Urease accessory protein UreD of Bacillus cereus (strain ATCC 10987 / NRS 248).